Reading from the N-terminus, the 432-residue chain is Adenylosuccinate synthetase (432 aa).

GTP contacts are provided by residues 13–19 (GDEGKGK) and 41–43 (GHT). Aspartate 14 acts as the Proton acceptor in catalysis. Mg(2+)-binding residues include aspartate 14 and glycine 41. Residues 14–17 (DEGK), 39–42 (NAGH), threonine 130, arginine 144, glutamine 225, threonine 240, and arginine 304 each bind IMP. Residue histidine 42 is the Proton donor of the active site. Substrate is bound at residue 300–306 (AVTGRPR). Residues arginine 306, 332–334 (KLD), and 415–417 (STG) each bind GTP.

This sequence belongs to the adenylosuccinate synthetase family. Homodimer. The cofactor is Mg(2+).

Its subcellular location is the cytoplasm. The enzyme catalyses IMP + L-aspartate + GTP = N(6)-(1,2-dicarboxyethyl)-AMP + GDP + phosphate + 2 H(+). Its pathway is purine metabolism; AMP biosynthesis via de novo pathway; AMP from IMP: step 1/2. Plays an important role in the de novo pathway of purine nucleotide biosynthesis. Catalyzes the first committed step in the biosynthesis of AMP from IMP. This is Adenylosuccinate synthetase from Actinobacillus pleuropneumoniae serotype 5b (strain L20).